Here is a 1005-residue protein sequence, read N- to C-terminus: Small G protein signaling modulator 2 (1005 aa).

An RUN domain is found at 34–191; sequence HEDSSHIIAL…EYTKLKTADH (158 aa). Disordered regions lie at residues 95-121 and 205-236; these read QAEGRKPSGGSQEALRKQGSTGGKAPA and HRIRGPPNRQDSPAKRPALGIRKRHSSGSASE. Residues S402 and L444 each carry the phosphoserine modification. Residues 566-938 enclose the Rab-GAP TBC domain; sequence GVEHEIRKDV…AVWEVIWAAR (373 aa). Disordered stretches follow at residues 657-687 and 729-761; these read FISVDDLEPSGPQDLEDSKPKREQEPGAGTP and GFEDDGAGEDGSEGPATAAHTFPGPHDPGQETL. The span at 672–681 shows a compositional bias: basic and acidic residues; sequence EDSKPKREQE. The span at 730 to 740 shows a compositional bias: acidic residues; the sequence is FEDDGAGEDGS.

This sequence belongs to the RUTBC family. As to quaternary structure, interacts with RAB4A, RAB11A, RAP1A, RAP1B, RAP2A and RAP2B. No interaction with RAB27A. Interacts with RAB9A. Widely expressed.

The protein localises to the cytoplasm. The protein resides in the melanosome. Possesses GTPase activator activity towards RAB32, RAB33B and RAB38. Regulates the trafficking of melanogenic enzymes TYR, TYRP1 and DCT/TYRP2 to melanosomes in melanocytes by inactivating RAB32 and RAB38. Inhibits RAB32 and RAB38 activation both directly by promoting their GTPase activity and indirectly by disrupting the RAB9A-HPS4 interaction which is required for RAB32/38 activation. This Mus musculus (Mouse) protein is Small G protein signaling modulator 2 (Sgsm2).